The following is a 727-amino-acid chain: MRPLLLLALLGWLLLAEAKGDAKPEDNLLVLTVATKETEGFRRFKRSAQFFNYKIQALGLGEDWNVEKGTSAGGGQKVRLLKKALEKHADKEDLVILFADSYDVLFASGPRELLKKFRQARSQVVFSAEELIYPDRRLETKYPVVSDGKRFLGSGGFIGYAPNLSKLVAEWEGQDSDSDQLFYTKIFLDPEKREQINITLDHRCRIFQNLDGALDEVVLKFEMGHVRARNLAYDTLPVLIHGNGPTKLQLNYLGNYIPRFWTFETGCTVCDEGLRSLKGIGDEALPTVLVGVFIEQPTPFVSLFFQRLLRLHYPQKHMRLFIHNHEQHHKAQVEEFLAQHGSEYQSVKLVGPEVRMANADARNMGADLCRQDRSCTYYFSVDADVALTEPNSLRLLIQQNKNVIAPLMTRHGRLWSNFWGALSADGYYARSEDYVDIVQGRRVGVWNVPYISNIYLIKGSALRGELQSSDLFHHSKLDPDMAFCANIRQQDVFMFLTNRHTLGHLLSLDSYRTTHLHNDLWEVFSNPEDWKEKYIHQNYTKALAGKLVETPCPDVYWFPIFTEVACDELVEEMEHFGQWSLGNNKDNRIQGGYENVPTIDIHMNQIGFEREWHKFLLEYIAPMTEKLYPGYYTRAQFDLAFVVRYKPDEQPSLMPHHDASTFTINIALNRVGVDYEGGGCRFLRYNCSIRAPRKGWTLMHPGRLTHYHEGLPTTRGTRYIAVSFVDP.

An N-terminal signal peptide occupies residues 1 to 18; that stretch reads MRPLLLLALLGWLLLAEA. 3 N-linked (GlcNAc...) asparagine glycosylation sites follow: asparagine 163, asparagine 197, and asparagine 538. A Fe2OG dioxygenase domain is found at 636–727; it reads QFDLAFVVRY…RYIAVSFVDP (92 aa). 2 residues coordinate Fe cation: histidine 656 and aspartate 658. N-linked (GlcNAc...) asparagine glycosylation occurs at asparagine 686. Histidine 708 provides a ligand contact to Fe cation. Arginine 718 is an active-site residue.

In terms of assembly, homodimer. Identified in a complex with P3H3 and P3H4. Requires Fe(2+) as cofactor. L-ascorbate serves as cofactor.

It is found in the rough endoplasmic reticulum membrane. The enzyme catalyses L-lysyl-[collagen] + 2-oxoglutarate + O2 = (5R)-5-hydroxy-L-lysyl-[collagen] + succinate + CO2. Its function is as follows. Part of a complex composed of PLOD1, P3H3 and P3H4 that catalyzes hydroxylation of lysine residues in collagen alpha chains and is required for normal assembly and cross-linkling of collagen fibrils. Forms hydroxylysine residues in -Xaa-Lys-Gly- sequences in collagens. These hydroxylysines serve as sites of attachment for carbohydrate units and are essential for the stability of the intermolecular collagen cross-links. The sequence is that of Procollagen-lysine,2-oxoglutarate 5-dioxygenase 1 (PLOD1) from Homo sapiens (Human).